We begin with the raw amino-acid sequence, 321 residues long: Arabinan endo-1,5-alpha-L-arabinosidase A (321 aa).

Residues 1 to 19 form the signal peptide; the sequence is MYQLLSVASVPLLASLVHG. Asp-34 functions as the Proton acceptor in the catalytic mechanism. The active-site Proton donor is the Glu-200. Asn-295 is a glycosylation site (N-linked (GlcNAc...) asparagine).

This sequence belongs to the glycosyl hydrolase 43 family.

It carries out the reaction Endohydrolysis of (1-&gt;5)-alpha-arabinofuranosidic linkages in (1-&gt;5)-arabinans.. The protein operates within glycan metabolism; L-arabinan degradation. Its function is as follows. Its preferred substrate is linear 1,5-alpha-L-arabinan. The enzyme activity is progressively reduced as 1,5-alpha-chains become shorter or more highly substituted. The polypeptide is Arabinan endo-1,5-alpha-L-arabinosidase A (abnA) (Aspergillus niger).